A 238-amino-acid polypeptide reads, in one-letter code: Calmodulin-binding protein 25 (238 aa).

Positions 68–78 (STNTLSSTVSG) are enriched in polar residues. The tract at residues 68-87 (STNTLSSTVSGASDPEIIGG) is disordered. Positions 92–108 (KRNCLLTDGKAAKRRAR) match the Bipartite nuclear localization signal motif. The short motif at 125–134 (FRQMVQQVTG) is the VQ element. The disordered stretch occupies residues 201 to 220 (SSVGLPSGKPSATADPGGSA).

As to quaternary structure, interacts with calmodulin (CaM). Interacts with WRKY25 and WRKY51. Expressed in leaves, flowers and siliques.

The protein localises to the nucleus. In terms of biological role, calmodulin-binding protein that functions as a negative regulator of osmotic stress tolerance. The chain is Calmodulin-binding protein 25 from Arabidopsis thaliana (Mouse-ear cress).